The chain runs to 169 residues: MSTHFSANQYEKSFDAKRLQNWEVPKHFKEHPSSLEGFTQIISNDRGHILEGIPRSSRSPWGEFVGTWDMTKPPLRTKTLKTKAMTENAQQKRKSASPKQEVARTPSPAKASPRRDSPVQASPRNASPLQGSPKKASAEKVCTPSPKAASVSPVANKSPSPKLATPEPC.

The tract at residues 53–169 (IPRSSRSPWG…SPKLATPEPC (117 aa)) is disordered. Positions 119–130 (VQASPRNASPLQ) are enriched in polar residues.

It belongs to the Flattop family.

It localises to the cytoplasm. Its subcellular location is the cytoskeleton. The protein resides in the cilium basal body. It is found in the cell projection. The protein localises to the cilium. It localises to the apical cell membrane. Acts as a regulator of cilium basal body docking and positioning in mono- and multiciliated cells. This chain is Protein Flattop homolog, found in Nematostella vectensis (Starlet sea anemone).